Here is a 210-residue protein sequence, read N- to C-terminus: Insulin receptor (210 aa).

One can recognise a Fibronectin type-III domain in the interval 1–96 (VSNSSSQIIL…SQILKELEES (96 aa)). N-linked (GlcNAc...) asparagine glycosylation is found at asparagine 3, asparagine 21, and asparagine 68. The segment at 55-78 (WSPPFESEDSQKHNQSEYEDSAGE) is disordered. The tract at residues 103–111 (EDYLHNVVF) is insulin-binding. The tract at residues 116-169 (TSSGTGAEDPRPSRKRRSLGDVGNVTVAVPTVAAFPNTSSTSTPTSPEEHRPFE) is disordered. Over 133–210 (SLGDVGNVTV…EERCSVAAYV (78 aa)) the chain is Extracellular. Residues 137–161 (VGNVTVAVPTVAAFPNTSSTSTPTS) are compositionally biased toward low complexity. N-linked (GlcNAc...) asparagine glycosylation is found at asparagine 139 and asparagine 152. A disulfide bond links cysteine 195 and cysteine 204.

Belongs to the protein kinase superfamily. Tyr protein kinase family. Insulin receptor subfamily. Tetramer of 2 alpha and 2 beta chains linked by disulfide bonds. The alpha chains carry the insulin-binding regions, while the beta chains carry the kinase domain. Forms a hybrid receptor with IGF1R, the hybrid is a tetramer consisting of 1 alpha chain and 1 beta chain of INSR and 1 alpha chain and 1 beta chain of IGF1R. Interacts with SORBS1 but dissociates from it following insulin stimulation. Binds SH2B2. Activated form of INSR interacts (via phosphorylated Tyrosine) with the PTB/PID domains of IRS1 and SHC1. The sequences surrounding the phosphorylated NPXY motif contribute differentially to either IRS1 or SHC1 recognition. Interacts (via tyrosines in the C-terminus) with IRS2 (via PTB domain and 591-786 AA); the 591-786 would be the primary anchor of IRS2 to INSR while the PTB domain would have a stabilizing action on the interaction with INSR. Interacts with the SH2 domains of the 85 kDa regulatory subunit of PI3K (PIK3R1) in vitro, when autophosphorylated on tyrosine residues. Interacts with SOCS7. Interacts with SOCS3. Interacts with SOCS1. Interacts with CAV2 (tyrosine-phosphorylated form); the interaction is increased with 'Tyr-27'phosphorylation of CAV2. Interacts with ARRB2. Interacts with GRB10; this interaction blocks the association between IRS1/IRS2 and INSR, significantly reduces insulin-stimulated tyrosine phosphorylation of IRS1 and IRS2 and thus decreases insulin signaling. Interacts with GRB7. Interacts with PDPK1. Interacts with GRB14 (via BPS domain). Interacts (via subunit alpha) with ENPP1 (via 485-599 AA); this interaction blocks autophosphorylation. Interacts with PTPRE. Interacts with STAT5B (via SH2 domain). Interacts with PTPRF. Interacts with ATIC; ATIC together with PRKAA2/AMPK2 and HACD3/PTPLAD1 is proposed to be part of a signaling netwok regulating INSR autophosphorylation and endocytosis. Interacts with the insulin receptor SORL1; this interaction strongly increases its surface exposure, hence strengthens insulin signal reception. Interacts (tyrosine phosphorylated) with CCDC88A/GIV (via SH2-like region); binding requires autophosphorylation of the INSR C-terminal region. Interacts with GNAI3; the interaction is probably mediated by CCDC88A/GIV. Interacts with LMBRD1. Interacts (in response to insulin stimulation) with NCK1; this interaction may recruit PTPN1 to mediate INSR dephosphorylation. Post-translationally, after being transported from the endoplasmic reticulum to the Golgi apparatus, the single glycosylated precursor is further glycosylated and then cleaved, followed by its transport to the plasma membrane. In terms of processing, autophosphorylated on tyrosine residues in response to insulin. Dephosphorylated by PTPN1, PTPRE and PTPRF. Dephosphorylated by PTPN2; down-regulates insulin-induced signaling. S-nitrosylation by BLVRB inhibits the receptor tyrosine kinase, thereby inhibiting insulin signaling.

Its subcellular location is the cell membrane. It localises to the late endosome. The protein resides in the lysosome. It carries out the reaction L-tyrosyl-[protein] + ATP = O-phospho-L-tyrosyl-[protein] + ADP + H(+). Its activity is regulated as follows. Activated in response to insulin. Autophosphorylation activates the kinase activity. PTPN1, PTPRE and PTPRF dephosphorylate important tyrosine residues, thereby reducing INSR activity. Inhibited by ENPP1. GRB10 and GRB14 inhibit the catalytic activity of the INSR, they block access of substrates to the activated receptor. SOCS1 and SOCS3 act as negative regulators of INSR activity, they bind to the activated INRS and interfere with the phosphorylation of INSR substrates. In terms of biological role, receptor tyrosine kinase which mediates the pleiotropic actions of insulin. Binding of insulin leads to phosphorylation of several intracellular substrates, including, insulin receptor substrates (IRS1, 2, 3, 4), SHC, GAB1, CBL and other signaling intermediates. Each of these phosphorylated proteins serve as docking proteins for other signaling proteins that contain Src-homology-2 domains (SH2 domain) that specifically recognize different phosphotyrosine residues, including the p85 regulatory subunit of PI3K and SHP2. Phosphorylation of IRSs proteins lead to the activation of two main signaling pathways: the PI3K-AKT/PKB pathway, which is responsible for most of the metabolic actions of insulin, and the Ras-MAPK pathway, which regulates expression of some genes and cooperates with the PI3K pathway to control cell growth and differentiation. Binding of the SH2 domains of PI3K to phosphotyrosines on IRS1 leads to the activation of PI3K and the generation of phosphatidylinositol-(3, 4, 5)-triphosphate (PIP3), a lipid second messenger, which activates several PIP3-dependent serine/threonine kinases, such as PDPK1 and subsequently AKT/PKB. The net effect of this pathway is to produce a translocation of the glucose transporter SLC2A4/GLUT4 from cytoplasmic vesicles to the cell membrane to facilitate glucose transport. Moreover, upon insulin stimulation, activated AKT/PKB is responsible for: anti-apoptotic effect of insulin by inducing phosphorylation of BAD; regulates the expression of gluconeogenic and lipogenic enzymes by controlling the activity of the winged helix or forkhead (FOX) class of transcription factors. Another pathway regulated by PI3K-AKT/PKB activation is mTORC1 signaling pathway which regulates cell growth and metabolism and integrates signals from insulin. AKT mediates insulin-stimulated protein synthesis by phosphorylating TSC2 thereby activating mTORC1 pathway. The Ras/RAF/MAP2K/MAPK pathway is mainly involved in mediating cell growth, survival and cellular differentiation of insulin. Phosphorylated IRS1 recruits GRB2/SOS complex, which triggers the activation of the Ras/RAF/MAP2K/MAPK pathway. In addition to binding insulin, the insulin receptor can bind insulin-like growth factors (IGFI and IGFII). When present in a hybrid receptor with IGF1R, binds IGF1. In adipocytes, inhibits lipolysis. The protein is Insulin receptor (INSR) of Macaca mulatta (Rhesus macaque).